A 384-amino-acid polypeptide reads, in one-letter code: Anhydro-N-acetylmuramic acid kinase (384 aa).

Position 9-16 (9-16 (GTSADGVD)) interacts with ATP.

This sequence belongs to the anhydro-N-acetylmuramic acid kinase family.

The enzyme catalyses 1,6-anhydro-N-acetyl-beta-muramate + ATP + H2O = N-acetyl-D-muramate 6-phosphate + ADP + H(+). It functions in the pathway amino-sugar metabolism; 1,6-anhydro-N-acetylmuramate degradation. Its pathway is cell wall biogenesis; peptidoglycan recycling. Functionally, catalyzes the specific phosphorylation of 1,6-anhydro-N-acetylmuramic acid (anhMurNAc) with the simultaneous cleavage of the 1,6-anhydro ring, generating MurNAc-6-P. Is required for the utilization of anhMurNAc either imported from the medium or derived from its own cell wall murein, and thus plays a role in cell wall recycling. The sequence is that of Anhydro-N-acetylmuramic acid kinase from Synechococcus sp. (strain CC9311).